The chain runs to 472 residues: 3-isopropylmalate dehydratase large subunit (472 aa).

The [4Fe-4S] cluster site is built by C353, C414, and C417.

Belongs to the aconitase/IPM isomerase family. LeuC type 1 subfamily. As to quaternary structure, heterodimer of LeuC and LeuD. [4Fe-4S] cluster serves as cofactor.

It catalyses the reaction (2R,3S)-3-isopropylmalate = (2S)-2-isopropylmalate. It participates in amino-acid biosynthesis; L-leucine biosynthesis; L-leucine from 3-methyl-2-oxobutanoate: step 2/4. Its function is as follows. Catalyzes the isomerization between 2-isopropylmalate and 3-isopropylmalate, via the formation of 2-isopropylmaleate. This Acinetobacter baumannii (strain ATCC 17978 / DSM 105126 / CIP 53.77 / LMG 1025 / NCDC KC755 / 5377) protein is 3-isopropylmalate dehydratase large subunit.